A 440-amino-acid chain; its full sequence is Gamma-aminobutyric acid receptor subunit pi (440 aa).

The N-terminal stretch at 1–23 is a signal peptide; that stretch reads MSYSLYLAFLCLSLLTQRTCIQG. Over 24-241 the chain is Extracellular; that stretch reads NQVNVEVSRS…LVLQFELRRN (218 aa). Residues N43, N102, and N145 are each glycosylated (N-linked (GlcNAc...) asparagine). C160 and C174 are oxidised to a cystine. N-linked (GlcNAc...) asparagine glycans are attached at residues N196 and N228. Residues 242–262 traverse the membrane as a helical segment; the sequence is VLYFILETYVPSTFLVVLSWV. At 263–270 the chain is on the cytoplasmic side; sequence SFWISLDS. A helical membrane pass occupies residues 271–290; it reads VPARTCIGVTTVLSMTTLMI. At 291-301 the chain is on the extracellular side; that stretch reads GSRTSLPNTNC. A helical membrane pass occupies residues 302-322; it reads FIKAIDVYLGICFSFVFGALL. Topologically, residues 323–419 are cytoplasmic; sequence EYAVAHYSSL…NPSNVDRYSK (97 aa). A helical membrane pass occupies residues 420–440; that stretch reads LLFPLIFMLANVFYWAYYMYF.

The protein belongs to the ligand-gated ion channel (TC 1.A.9) family. Gamma-aminobutyric acid receptor (TC 1.A.9.5) subfamily. GABRP sub-subfamily. Heteropentamer, formed by a combination of alpha (GABRA1-6), beta (GABRB1-3), gamma (GABRG1-3), delta (GABRD), epsilon (GABRE), rho (GABRR1-3), pi (GABRP) and theta (GABRQ) chains, each subunit exhibiting distinct physiological and pharmacological properties.

The protein resides in the cell membrane. Its subcellular location is the apical cell membrane. The catalysed reaction is chloride(in) = chloride(out). Functionally, pi subunit of the heteropentameric ligand-gated chloride channel gated by gamma-aminobutyric acid (GABA). GABA-gated chloride channels, also named GABA(A) receptors (GABAAR), consist of five subunits arranged around a central pore and contain GABA active binding site(s) located at the alpha and beta subunit interfaces. When activated by GABA, GABAARs selectively allow the flow of chloride anions across the cell membrane down their electrochemical gradient. Pi-containing GABAARs are mostly located in peripheral tissues. In the uterus, pi subunits modulate uterus contraction by altering the sensitivity of GABAARs to pregnanolone. In the lungs, pi-containing GABAARs contribute to pulmonary fluid transport via luminal secretion of chloride. This is Gamma-aminobutyric acid receptor subunit pi from Mus musculus (Mouse).